A 952-amino-acid polypeptide reads, in one-letter code: Aminopeptidase 2, mitochondrial (952 aa).

The transit peptide at 1–52 (MPIVRWLLLKSAVRGSSLIGKAHPCLRSIAAHPRYLSNVYSPPAGVSRSLRI) directs the protein to the mitochondrion. Substrate is bound by residues glutamate 228 and 360–364 (GAMEN). N-linked (GlcNAc...) asparagine glycosylation occurs at asparagine 381. Residue histidine 396 participates in Zn(2+) binding. Glutamate 397 (proton acceptor) is an active-site residue. Zn(2+) contacts are provided by histidine 400 and glutamate 419. Residue asparagine 713 is glycosylated (N-linked (GlcNAc...) asparagine).

Belongs to the peptidase M1 family. Requires Zn(2+) as cofactor.

Its subcellular location is the periplasm. The protein resides in the cytoplasm. It is found in the mitochondrion. Functionally, involved in the cellular supply of leucine from externally offered leucine-containing dipeptide substrates. The chain is Aminopeptidase 2, mitochondrial (APE2) from Saccharomyces cerevisiae (strain ATCC 204508 / S288c) (Baker's yeast).